Here is a 182-residue protein sequence, read N- to C-terminus: UPF0316 protein BCQ_3166 (182 aa).

The next 3 membrane-spanning stretches (helical) occupy residues 6 to 26, 32 to 52, and 58 to 78; these read LIFV…ILLV, SAAA…GIVF, and WMNI…GGYI.

The protein belongs to the UPF0316 family.

Its subcellular location is the cell membrane. This Bacillus cereus (strain Q1) protein is UPF0316 protein BCQ_3166.